The sequence spans 374 residues: Potassium channel subfamily K member 9 (374 aa).

Over M1–T8 the chain is Cytoplasmic. The helical transmembrane segment at L9–L29 threads the bilayer. Topologically, residues E30–I88 are extracellular. An N-linked (GlcNAc...) asparagine glycan is attached at N53. The segment at residues T89–P101 is an intramembrane region (pore-forming). 4 residues coordinate K(+): T93, I94, G95, and Y96. The interval T93–H98 is selectivity filter 1. Residues G102–K107 are Extracellular-facing. The chain crosses the membrane as a helical span at residues A108–L128. At G129–N158 the chain is on the cytoplasmic side. The chain crosses the membrane as a helical span at residues M159–S179. At Q180–F194 the chain is on the extracellular side. Positions I195 to A207 form an intramembrane region, pore-forming. T199, I200, G201, and F202 together coordinate K(+). The tract at residues T199 to D204 is selectivity filter 2. The Extracellular segment spans residues L208–P218. A helical membrane pass occupies residues L219 to L239. Topologically, residues N240–V374 are cytoplasmic. The interval V243 to T248 is X-gate.

Belongs to the two pore domain potassium channel (TC 1.A.1.8) family. Homodimer. Heterodimer with KCNK1. Heterodimer with KCNK3. As to expression, mainly found in the cerebellum. Also found in adrenal gland, kidney and lung.

The protein resides in the cell membrane. It localises to the mitochondrion inner membrane. The protein localises to the cell projection. Its subcellular location is the dendrite. The catalysed reaction is K(+)(in) = K(+)(out). The enzyme catalyses Na(+)(in) = Na(+)(out). With respect to regulation, inhibited by extracellular acidification adopting a nonconductive conformation at pH 6.0. Inhibited by phorbol 12-myristate 13-acetate (PMA). Functionally, k(+) channel that conducts voltage-dependent outward rectifying currents upon membrane depolarization. Voltage sensing is coupled to K(+) electrochemical gradient in an 'ion flux gating' mode where outward but not inward ion flow opens the gate. Changes ion selectivity and becomes permeable to Na(+) ions in response to extracellular acidification. Protonation of the pH sensor His-98 stabilizes C-type inactivation conformation likely converting the channel from outward K(+)-conducting, to inward Na(+)-conducting to nonconductive state. Homo- and heterodimerizes to form functional channels with distinct regulatory and gating properties. Allows K(+) currents with fast-gating kinetics important for the repolarization and hyperpolarization phases of action potentials. In granule neurons, hyperpolarizes the resting membrane potential to limit intrinsic neuronal excitability, but once the action potential threshold is reached, supports high-frequency action potential firing and increased neuronal excitability. Homomeric and/or heteromeric KCNK3:KCNK9 channels operate in cerebellar granule cells, whereas heteromeric KCNK1:KCNK9 enables currents in hippocampal dentate gyrus granule neurons. Dispensable for central chemosensory respiration i.e. breathing controlled by brainstem CO2/pH, it rather conducts pH-sensitive currents and controls the firing rate of serotonergic raphe neurons involved in potentiation of the respiratory chemoreflex. In retinal ganglion cells, mediates outward currents that regulate action potentials in response to acidification of the synaptic cleft. Involved in transmission of image-forming and nonimage-forming visual information in the retina. In adrenal gland, contributes to the maintenance of a hyperpolarized resting membrane potential of aldosterone-producing cells at zona glomerulosa and limits aldosterone release as part of a regulatory mechanism that controls arterial blood pressure and electrolyte homeostasis. The chain is Potassium channel subfamily K member 9 from Homo sapiens (Human).